An 806-amino-acid polypeptide reads, in one-letter code: 85/88 kDa calcium-independent phospholipase A2 (806 aa).

ANK repeat units follow at residues 120–147 (WSVA…ANCA), 151–181 (EGCT…QMDV), 185–215 (KGET…GLNQ), 219–248 (QGLT…RCNI), 251–281 (PNGY…QIHS), 286–312 (YGAS…NVNS), 316–345 (AGNT…NADA), 349–378 (HGNT…EVDT), and 382–403 (FGET…KAIL). 2 consecutive transmembrane segments (helical) span residues 480 to 500 (LLCL…LIAI) and 511 to 531 (LFDW…ILHS). The region spanning 481-665 (LCLDGGGVKG…LANNPTLDAM (185 aa)) is the PNPLA domain. The GXGXXG motif lies at 485–490 (GGGVKG). The GXSXG motif lies at 517–521 (GTSTG). Serine 519 serves as the catalytic Nucleophile. The active-site Proton acceptor is aspartate 652. The DGA/G motif lies at 652-654 (DGG). The tract at residues 677–686 (RKGQANKVKK) is calmodulin-binding (1-9-14 motif). A calmodulin-binding (IQ motif) region spans residues 748-759 (AWCEMVGIQYFR).

Homodimer formed by catalytic domains tightly interacting through a large hydrophobic interface. The contact area involves 3 alpha helices, several loops and a part of the beta sheet from each monomer. Both active sites of the dimer are in close proximity adopting an open conformation that provide sufficient space for phospholipid access and favoring cooperativity in deacylation-reacylation reactions. Each monomer has 9 ankyrin repeats stacked side-by-side in an elongated structure oriented outwards from the catalytic core. Four different transcripts were found to be expressed in a distinct tissue distribution.

It localises to the cytoplasm. Its subcellular location is the cell membrane. The protein resides in the mitochondrion. It is found in the cell projection. The protein localises to the pseudopodium. The catalysed reaction is a 1,2-diacyl-sn-glycero-3-phosphocholine + H2O = a 1-acyl-sn-glycero-3-phosphocholine + a fatty acid + H(+). It carries out the reaction a 1-O-alkyl-2-acyl-sn-glycero-3-phosphocholine + H2O = a 1-O-alkyl-sn-glycero-3-phosphocholine + a fatty acid + H(+). The enzyme catalyses 1,2-dihexadecanoyl-sn-glycero-3-phosphocholine + H2O = 1-hexadecanoyl-sn-glycero-3-phosphocholine + hexadecanoate + H(+). It catalyses the reaction 1-hexadecanoyl-2-(9Z-octadecenoyl)-sn-glycero-3-phosphocholine + H2O = 1-hexadecanoyl-sn-glycero-3-phosphocholine + (9Z)-octadecenoate + H(+). The catalysed reaction is 1-hexadecanoyl-2-(9Z,12Z-octadecadienoyl)-sn-glycero-3-phosphocholine + H2O = (9Z,12Z)-octadecadienoate + 1-hexadecanoyl-sn-glycero-3-phosphocholine + H(+). It carries out the reaction 1-hexadecanoyl-2-(5Z,8Z,11Z,14Z-eicosatetraenoyl)-sn-glycero-3-phosphocholine + H2O = 1-hexadecanoyl-sn-glycero-3-phosphocholine + (5Z,8Z,11Z,14Z)-eicosatetraenoate + H(+). The enzyme catalyses 1-octadecanoyl-2-(5Z,8Z,11Z,14Z-eicosatetraenoyl)-sn-glycero-3-phosphocholine + H2O = 1-octadecanoyl-sn-glycero-3-phosphocholine + (5Z,8Z,11Z,14Z)-eicosatetraenoate + H(+). It catalyses the reaction 1-hexadecanoyl-2-(5Z,8Z,11Z,14Z-eicosatetraenoyl)-sn-glycero-3-phosphoethanolamine + H2O = 1-hexadecanoyl-sn-glycero-3-phosphoethanolamine + (5Z,8Z,11Z,14Z)-eicosatetraenoate + H(+). The catalysed reaction is 1,2-dihexadecanoyl-sn-glycero-3-phosphate + H2O = 1-hexadecanoyl-sn-glycero-3-phosphate + hexadecanoate + H(+). It carries out the reaction a 1-acyl-sn-glycero-3-phosphocholine + H2O = sn-glycerol 3-phosphocholine + a fatty acid + H(+). The enzyme catalyses 1-hexadecanoyl-sn-glycero-3-phosphocholine + H2O = sn-glycerol 3-phosphocholine + hexadecanoate + H(+). It catalyses the reaction 1-(5Z,8Z,11Z,14Z-eicosatetraenoyl)-sn-glycero-3-phosphocholine + H2O = sn-glycerol 3-phosphocholine + (5Z,8Z,11Z,14Z)-eicosatetraenoate + H(+). The catalysed reaction is 2-(5Z,8Z,11Z,14Z)-eicosatetraenoyl-sn-glycero-3-phosphocholine + H2O = sn-glycerol 3-phosphocholine + (5Z,8Z,11Z,14Z)-eicosatetraenoate + H(+). It carries out the reaction 1-O-hexadecyl-2-(5Z,8Z,11Z,14Z)-eicosatetraenoyl-sn-glycero-3-phosphocholine + H2O = 1-O-hexadecyl-sn-glycero-3-phosphocholine + (5Z,8Z,11Z,14Z)-eicosatetraenoate + H(+). The enzyme catalyses 1-O-hexadecyl-2-acetyl-sn-glycero-3-phosphocholine + H2O = 1-O-hexadecyl-sn-glycero-3-phosphocholine + acetate + H(+). It catalyses the reaction hexadecanoyl-CoA + H2O = hexadecanoate + CoA + H(+). The catalysed reaction is 1',3'-bis[1,2-di-(9Z-octadecenoyl)-sn-glycero-3-phospho]-glycerol + H2O = 1'-[1,2-di-(9Z-octadecenoyl)-sn-glycero-3-phospho]-3'-[1-(9Z-octadecenoyl)-sn-glycero-3-phospho]-glycerol + (9Z)-octadecenoate + H(+). It carries out the reaction 1'-[1,2-di-(9Z-octadecenoyl)-sn-glycero-3-phospho]-3'-[1-(9Z-octadecenoyl)-sn-glycero-3-phospho]-glycerol + H2O = 1',3'-bis-[1-(9Z-octadecenoyl)-sn-glycero-3-phospho]-glycerol + (9Z)-octadecenoate + H(+). The enzyme catalyses 1',3'-bis-[1,2-di-(9Z,12Z-octadecadienoyl)-sn-glycero-3-phospho]-glycerol + H2O = 1'-[1,2-di-(9Z,12Z-octadecadienoyl)-sn-glycero-3-phospho]-3'-[1-(9Z,12Z-octadecadienoyl)-sn-glycero-3-phospho]-glycerol + (9Z,12Z)-octadecadienoate + H(+). It catalyses the reaction 1-octadecanoyl-2-(15-hydroxy-(5Z,8Z,11Z,13E)-eicosatetraenoyl)-sn-glycero-3-phosphoethanolamine + H2O = 1-octadecanoyl-sn-glycero-3-phosphoethanolamine + 15-hydroxy-(5Z,8Z,11Z,13E)-eicosatetraenoate + H(+). Activated by ATP. Inhibited by calcium-activated calmodulin. Inhibited by bromoenol lactone (BEL). Calcium-independent phospholipase involved in phospholipid remodeling with implications in cellular membrane homeostasis, mitochondrial integrity and signal transduction. Hydrolyzes the ester bond of the fatty acyl group attached at sn-1 or sn-2 position of phospholipids (phospholipase A1 and A2 activity respectively), producing lysophospholipids that are used in deacylation-reacylation cycles. Hydrolyzes both saturated and unsaturated long fatty acyl chains in various glycerophospholipid classes such as phosphatidylcholines, phosphatidylethanolamines and phosphatidates, with a preference for hydrolysis at sn-2 position. Can further hydrolyze lysophospholipids carrying saturated fatty acyl chains (lysophospholipase activity). Upon oxidative stress, contributes to remodeling of mitochondrial phospholipids in pancreatic beta cells, in a repair mechanism to reduce oxidized lipid content. Preferentially hydrolyzes oxidized polyunsaturated fatty acyl chains from cardiolipins, yielding monolysocardiolipins that can be reacylated with unoxidized fatty acyls to regenerate native cardiolipin species. Hydrolyzes oxidized glycerophosphoethanolamines present in pancreatic islets, releasing oxidized polyunsaturated fatty acids such as hydroxyeicosatetraenoates (HETEs). Has thioesterase activity toward fatty-acyl CoA releasing CoA-SH known to facilitate fatty acid transport and beta-oxidation in mitochondria particularly in skeletal muscle. Plays a role in regulation of membrane dynamics and homeostasis. Selectively hydrolyzes sn-2 arachidonoyl group in plasmalogen phospholipids, structural components of lipid rafts and myelin. Regulates F-actin polymerization at the pseudopods, which is required for both speed and directionality of MCP1/CCL2-induced monocyte chemotaxis. Targets membrane phospholipids to produce potent lipid signaling messengers. Generates lysophosphatidate (LPA, 1-acyl-glycerol-3-phosphate), which acts via G-protein receptors in various cell types. Has phospholipase A2 activity toward platelet-activating factor (PAF, 1-O-alkyl-2-acetyl-sn-glycero-3-phosphocholine), likely playing a role in inactivation of this potent pro-inflammatory signaling lipid. In response to glucose, amplifies calcium influx in pancreatic beta cells to promote INS secretion. Functionally, lacks the catalytic domain and may act as a negative regulator of the catalytically active isoforms. The protein is 85/88 kDa calcium-independent phospholipase A2 (PLA2G6) of Homo sapiens (Human).